The sequence spans 285 residues: Hsp90 co-chaperone Cdc37-like 1 (285 aa).

Residues 34 to 54 (LHNSESMDQEQAMAQAELSEL) form a disordered region. The stretch at 35 to 73 (HNSESMDQEQAMAQAELSELQRSEEEWRRKEAALSQGEN) forms a coiled coil.

Belongs to the CDC37 family. As to quaternary structure, forms complexes with Hsp70 and Hsp90.

The protein localises to the cytoplasm. Its function is as follows. Co-chaperone that binds to numerous proteins and promotes their interaction with Hsp70 and Hsp90. The chain is Hsp90 co-chaperone Cdc37-like 1 (cdc37l1) from Xenopus tropicalis (Western clawed frog).